The primary structure comprises 627 residues: Xaa-Pro aminopeptidase 1 (627 aa).

A peptide-binding residues include arginine 88 and histidine 405. Residues aspartate 424, aspartate 435, and histidine 498 each coordinate Mn(2+). Residues histidine 498, histidine 507, and glutamate 533 each contribute to the a peptide site. The Mn(2+) site is built by glutamate 533 and glutamate 547.

The protein belongs to the peptidase M24B family. Homodimer. It depends on Mn(2+) as a cofactor.

It is found in the cytoplasm. It localises to the cytosol. The enzyme catalyses Release of any N-terminal amino acid, including proline, that is linked to proline, even from a dipeptide or tripeptide.. In terms of biological role, metalloaminopeptidase that catalyzes the removal of a penultimate prolyl residue from the N-termini of peptides, such as Arg-Pro-Pro. The polypeptide is Xaa-Pro aminopeptidase 1 (xpnpep1) (Dictyostelium discoideum (Social amoeba)).